A 118-amino-acid chain; its full sequence is REPTOR-binding partner (118 aa).

Residues 1-20 (MADMEIQSNKMSITEETQVQ) are compositionally biased toward polar residues. The tract at residues 1 to 53 (MADMEIQSNKMSITEETQVQTRKECGKRGRKPGRKTSTEKLDMKAKLERSRQS) is disordered. The span at 36 to 53 (TSTEKLDMKAKLERSRQS) shows a compositional bias: basic and acidic residues. Residues 40 to 77 (KLDMKAKLERSRQSARECRARKKLRYQYLEELVADREK) form a basic motif region. The 51-residue stretch at 40 to 90 (KLDMKAKLERSRQSARECRARKKLRYQYLEELVADREKAVVALRTELERLI) folds into the bZIP domain. A leucine-zipper region spans residues 82 to 89 (LRTELERL).

This sequence belongs to the bZIP family. ATF subfamily. In terms of assembly, homodimer. Interacts (via C-terminus) with REPTOR (via C-terminus).

It is found in the nucleus. The protein localises to the chromosome. Its function is as follows. Transcriptional regulator that acts in the TORC1 signaling pathway to regulate energy homeostasis and promote survival during nutrient deprivation. Interacts with REPTOR to form a transcriptional activator complex that functions downstream of TORC1 to up-regulate the expression of most target genes induced by TORC1 inhibition. In the complex, acts to enhance the binding of the transcriptional activator REPTOR to the regulatory sequences of target genes. Under normal conditions TORC1 is active, inhibiting the formation of the REPTOR/REPTOR-BP complex by phosphorylating REPTOR and mediates its cytoplasmic retention by forming a docking site for 14-3-3 proteins. Upon TORC1 inhibition resulting from nutrient stress, REPTOR is recruited into the nucleus where it interacts with REPTOR-BP and together they maintain organismal metabolism by activating the expression of target stress response genes including those involved in glycogenesis and triglyceride biosynthesis. The complex also appears to negatively regulate some aspects of TORC1-dependent larval growth. This Drosophila melanogaster (Fruit fly) protein is REPTOR-binding partner.